The sequence spans 180 residues: ADP-ribosylation factor 5 (180 aa).

A lipid anchor (N-myristoyl glycine) is attached at Gly2. Residues Gly24 to Thr31, Asp67 to Gln71, and Asn126 to Asp129 contribute to the GTP site.

This sequence belongs to the small GTPase superfamily. Arf family.

The protein localises to the golgi apparatus. Functionally, GTP-binding protein involved in protein trafficking; may modulate vesicle budding and uncoating within the Golgi apparatus. This chain is ADP-ribosylation factor 5 (ARF5), found in Gallus gallus (Chicken).